A 410-amino-acid chain; its full sequence is MKKVTVDDFSSPENMHDVIGFYKKLTEHQEPLIRLDDYYGLGPAWVALRHDDVVTILKNPRFLKDVRKFTPLQDKKDSIDDSTSASKLFEWMMNMPNMLTVDPPDHTRLRRLASKAFTPRMIENLRPRIQQITNELLDSVEGKRNMDLVADFSFPLPIIVISEMLGIPPLDQKRFRDWTDKLIKAAMDPSQGAVVMETLKEFIDYIKKMLVEKRNHPDDDVMSALLQAHEQEDKLSENELLSTIWLLITAGHETTAHLISNGVLALLKHPEQMRLLRDNPSLLPSAVEELLRYAGPVMIGGRFAGEDIIMHGKMIPKGEMVLFSLVAANIDSQKFSYPEGLDITREENEHLTFGKGIHHCLGAPLARMEAHIAFGTLLQRFPDLRLAIESEQLVYNNSTLRSLKSLPVIF.

2 residues coordinate heme: histidine 106 and arginine 110. Substrate contacts are provided by threonine 249 and glutamate 253. Residues arginine 302, histidine 358, and cysteine 360 each contribute to the heme site.

The protein belongs to the cytochrome P450 family. Requires heme as cofactor.

The enzyme catalyses mevastatin + 2 reduced [2Fe-2S]-[ferredoxin] + O2 + 2 H(+) = pravastatin lactone + 2 oxidized [2Fe-2S]-[ferredoxin] + H2O. Functionally, cytochrome P450 whose physiological substrate is unknown. In vitro, is able to catalyze the selective hydroxylation of mevastatin to pravastatin, the widely used therapeutic agent for hypercholesterolemia. The polypeptide is Cytochrome P450 CYP107DY1 (Priestia megaterium (strain ATCC 12872 / QMB1551) (Bacillus megaterium)).